The following is a 681-amino-acid chain: Chaperone protein HtpG (681 aa).

The tract at residues 1–326 is a; substrate-binding; the sequence is MQKGNIGVTT…SPDIPLNVSR (326 aa). The tract at residues 327–545 is b; it reads SYLQSDSNVK…YMRRMKEMAN (219 aa). The interval 546–681 is c; sequence IQAGMSFYGE…NFVKRSIELI (136 aa). The segment at 589 to 620 is disordered; it reads IQTEMNSVSKRRNELKDSQKDKKEEDIPTAEK. Residues 599 to 620 are compositionally biased toward basic and acidic residues; the sequence is RRNELKDSQKDKKEEDIPTAEK.

This sequence belongs to the heat shock protein 90 family. As to quaternary structure, homodimer.

It is found in the cytoplasm. Functionally, molecular chaperone. Has ATPase activity. This Bacteroides thetaiotaomicron (strain ATCC 29148 / DSM 2079 / JCM 5827 / CCUG 10774 / NCTC 10582 / VPI-5482 / E50) protein is Chaperone protein HtpG.